The sequence spans 433 residues: MEPRLGPKAAALHLGWPFLLLWVSGLSYSVSSPASPSPSPVSRVRTSYNLGKTFLGLDKCNACIGTSICKKFFKEEIRFDNGLALHLGPPPDDLPSYSANYSDDFKTWRPVEISRLVSKQQNKISDGRICASAAAPKTCSIERVLRKTGRFQKWLQAKRLTPDLVRGLSSPLLRCPSQRLLDRVVRRYAEVADAGSIFMDHFTDRDKLRLLYTLAVNTHPVLLQIFPGAEGWPLPQYLGSCGRFLVSTSTSPLQEFYGAPPDQAADLAYQLLGVLESLRSNDLNYFFYFTHVDADMFGIFNNGHLFIRDASALGVIDRQEGSQAASGAGDNKDIFSCLVSGCQTKLPSCDTIPEKQNLVLVCSQVLPLLLQAKFPSPVQEEIDAELTRCADGTRPDPEVLGAASRLKDILRPLRTCDPRFAYRYPDCKYDDKF.

Residues 1–29 (MEPRLGPKAAALHLGWPFLLLWVSGLSYS) form the signal peptide. N-linked (GlcNAc...) asparagine glycosylation occurs at Asn-100.

The protein belongs to the DIPK family.

Its subcellular location is the secreted. This chain is Divergent protein kinase domain 2B (DIPK2B), found in Bos taurus (Bovine).